Here is a 444-residue protein sequence, read N- to C-terminus: Putative zinc metalloprotease XF_1047 (444 aa).

A Zn(2+)-binding site is contributed by His22. The active site involves Glu23. Residue His26 participates in Zn(2+) binding. The chain crosses the membrane as a helical span at residues 98–120 (IAIVAAGPLANLLLCMLLLWVLF). The 85-residue stretch at 192-276 (TLELSKLKQP…DGHPGMIEIR (85 aa)) folds into the PDZ domain. The next 2 membrane-spanning stretches (helical) occupy residues 371-393 (VGWF…LFPI) and 418-440 (AMAA…AFYN).

The protein belongs to the peptidase M50B family. It depends on Zn(2+) as a cofactor.

It localises to the cell inner membrane. In Xylella fastidiosa (strain 9a5c), this protein is Putative zinc metalloprotease XF_1047.